A 74-amino-acid polypeptide reads, in one-letter code: Defensin (74 aa).

An N-terminal signal peptide occupies residues 1-21; it reads MRGIYICLVFVLVCGLVSGLA. Residues 22 to 34 constitute a propeptide that is removed on maturation; that stretch reads DVPAESEMAHLRV. 3 disulfides stabilise this stretch: Cys40/Cys61, Cys47/Cys69, and Cys51/Cys71.

In terms of tissue distribution, expressed in the hemocytes, fat body and ovaries.

It is found in the secreted. Antibacterial peptide mostly active against Gram-positive bacteria. The polypeptide is Defensin (Rhipicephalus microplus (Cattle tick)).